Reading from the N-terminus, the 343-residue chain is Delta(1)-pyrroline-2-carboxylate/Delta(1)-piperideine-2-carboxylate reductase (343 aa).

The active-site Charge relay system is S53. H54 serves as the catalytic Proton donor. R58 is a substrate binding site. 126–130 (HFAAL) lines the NADP(+) pocket. T166 contacts substrate. Position 184–186 (184–186 (DLA)) interacts with NADP(+). Position 192–193 (192–193 (HG)) interacts with substrate. The active-site Charge relay system is the D194. Residues 236 to 237 (HK) and 309 to 315 (RLPGDRR) contribute to the NADP(+) site.

The protein belongs to the LDH2/MDH2 oxidoreductase family. In terms of assembly, homodimer.

It carries out the reaction L-pipecolate + NADP(+) = Delta(1)-piperideine-2-carboxylate + NADPH + H(+). The catalysed reaction is L-proline + NADP(+) = 1-pyrroline-2-carboxylate + NADPH + H(+). It catalyses the reaction N-methyl-L-alanine + NADP(+) + H2O = methylamine + pyruvate + NADPH + H(+). Its activity is regulated as follows. Is inhibited by the substrate analog pyrrole-2-carboxylate, and by 2-picolinate. Its function is as follows. Catalyzes the reduction of both Delta(1)-pyrroline-2-carboxylate (Pyr2C) and Delta(1)-piperideine-2-carboxylate (Pip2C) to L-proline and L-pipecolate, respectively, using NADPH as the electron donor. Can catalyze the reverse oxidation reactions, albeit at a much lower rate. Is also able to catalyze in vitro the NADPH-dependent formation of N-methylalanine from pyruvate and N-methylamine; can act on other alpha-keto acids and specifically uses methylamine and not ammonia for these reductive amination reactions. Can use NADH instead of NADPH, although with much less efficiency. This is Delta(1)-pyrroline-2-carboxylate/Delta(1)-piperideine-2-carboxylate reductase from Pseudomonas syringae pv. tomato.